The following is a 324-amino-acid chain: IDS-like terpene synthase 2 (324 aa).

Mg(2+) contacts are provided by aspartate 77 and aspartate 81.

This sequence belongs to the FPP/GGPP synthase family. Mg(2+) is required as a cofactor.

The enzyme catalyses (2E)-geranyl diphosphate = (E)-beta-ocimene + diphosphate. It carries out the reaction (2E,6E)-farnesyl diphosphate = (3E,6E)-alpha-farnesene + diphosphate. It catalyses the reaction (2E,6E,10E)-geranylgeranyl diphosphate = (E,E,E)-alpha-springene + diphosphate. Functionally, terpene synthase that shows monoterpene synthase activity and produces (E)-beta-ocimene as a major product, using geranyl diphosphate (GPP) as substrate. Also shows sesquiterpene synthase activity as it is able to convert farnesyl diphosphate (FPP) into (E,E)-alpha-farnesene. Finally, TPS2 can convert geranylgeranyl diphosphate into (E,E,E)-alpha-springene. The chain is IDS-like terpene synthase 2 from Melampsora lini (Rust fungus).